A 105-amino-acid chain; its full sequence is Pyrimidine/purine nucleoside phosphorylase (105 aa).

Belongs to the nucleoside phosphorylase PpnP family.

The enzyme catalyses a purine D-ribonucleoside + phosphate = a purine nucleobase + alpha-D-ribose 1-phosphate. It catalyses the reaction adenosine + phosphate = alpha-D-ribose 1-phosphate + adenine. It carries out the reaction cytidine + phosphate = cytosine + alpha-D-ribose 1-phosphate. The catalysed reaction is guanosine + phosphate = alpha-D-ribose 1-phosphate + guanine. The enzyme catalyses inosine + phosphate = alpha-D-ribose 1-phosphate + hypoxanthine. It catalyses the reaction thymidine + phosphate = 2-deoxy-alpha-D-ribose 1-phosphate + thymine. It carries out the reaction uridine + phosphate = alpha-D-ribose 1-phosphate + uracil. The catalysed reaction is xanthosine + phosphate = alpha-D-ribose 1-phosphate + xanthine. Catalyzes the phosphorolysis of diverse nucleosides, yielding D-ribose 1-phosphate and the respective free bases. Can use uridine, adenosine, guanosine, cytidine, thymidine, inosine and xanthosine as substrates. Also catalyzes the reverse reactions. The sequence is that of Pyrimidine/purine nucleoside phosphorylase from Wolinella succinogenes (strain ATCC 29543 / DSM 1740 / CCUG 13145 / JCM 31913 / LMG 7466 / NCTC 11488 / FDC 602W) (Vibrio succinogenes).